The sequence spans 282 residues: MSKKHLKPLETCFEDEEDDVIYLPPGLVTGATSKKNEEFCGGSGKVQPSEMKRRSEGTSTDMTSKRAKKVSAEDEKKVGEWTKNPYFQRLWSEEDEIVMLQGIIKFEDVTGKSPFEDRHGFIEFVKNSISFEASVQQYIGKISQLKRKYTRKRKNGFSEGHEQKCFKLAMSIWGTKETSKKTDLCSSPKGKKVKEEDGDVTNSDWFENSFLLPSIESLGVDSVKRKWNVVPMEFKKKIEERLELLEADESECKKMEEMLKVKNSECVKQKTNLLNEVIDVMT.

The interval 33–73 (SKKNEEFCGGSGKVQPSEMKRRSEGTSTDMTSKRAKKVSAE) is disordered.

It belongs to the GeBP family.

This chain is Probable transcription factor At1g66420, found in Arabidopsis thaliana (Mouse-ear cress).